The sequence spans 492 residues: Glutamyl-tRNA(Gln) amidotransferase subunit A (492 aa).

Catalysis depends on charge relay system residues K78 and S158. S182 functions as the Acyl-ester intermediate in the catalytic mechanism.

This sequence belongs to the amidase family. GatA subfamily. In terms of assembly, heterotrimer of A, B and C subunits.

It carries out the reaction L-glutamyl-tRNA(Gln) + L-glutamine + ATP + H2O = L-glutaminyl-tRNA(Gln) + L-glutamate + ADP + phosphate + H(+). Allows the formation of correctly charged Gln-tRNA(Gln) through the transamidation of misacylated Glu-tRNA(Gln) in organisms which lack glutaminyl-tRNA synthetase. The reaction takes place in the presence of glutamine and ATP through an activated gamma-phospho-Glu-tRNA(Gln). The sequence is that of Glutamyl-tRNA(Gln) amidotransferase subunit A from Zymomonas mobilis subsp. mobilis (strain ATCC 31821 / ZM4 / CP4).